Reading from the N-terminus, the 252-residue chain is Triosephosphate isomerase (252 aa).

9 to 11 (NWK) contacts substrate. The Electrophile role is filled by histidine 95. Glutamate 167 (proton acceptor) is an active-site residue. Substrate contacts are provided by residues glycine 173, serine 213, and 234–235 (GG).

This sequence belongs to the triosephosphate isomerase family. In terms of assembly, homodimer.

It localises to the cytoplasm. It catalyses the reaction D-glyceraldehyde 3-phosphate = dihydroxyacetone phosphate. Its pathway is carbohydrate biosynthesis; gluconeogenesis. It participates in carbohydrate degradation; glycolysis; D-glyceraldehyde 3-phosphate from glycerone phosphate: step 1/1. In terms of biological role, involved in the gluconeogenesis. Catalyzes stereospecifically the conversion of dihydroxyacetone phosphate (DHAP) to D-glyceraldehyde-3-phosphate (G3P). In Syntrophotalea carbinolica (strain DSM 2380 / NBRC 103641 / GraBd1) (Pelobacter carbinolicus), this protein is Triosephosphate isomerase.